Here is a 54-residue protein sequence, read N- to C-terminus: Ovomucoid (54 aa).

In terms of domain architecture, Kazal-like spans 4 to 54 (VDCSDYPKPVCSLDYMPLCGSDNTTYNNKCIFCNAVVDSNGTITLSHFGKC). 3 cysteine pairs are disulfide-bonded: cysteine 6–cysteine 36, cysteine 14–cysteine 33, and cysteine 22–cysteine 54. N-linked (GlcNAc...) asparagine glycosylation is present at asparagine 43.

It is found in the secreted. The protein is Ovomucoid of Haemorhous mexicanus (House finch).